Here is a 419-residue protein sequence, read N- to C-terminus: UDP-N-acetylglucosamine 1-carboxyvinyltransferase (419 aa).

22-23 (KN) lines the phosphoenolpyruvate pocket. R92 contacts UDP-N-acetyl-alpha-D-glucosamine. C116 (proton donor) is an active-site residue. A 2-(S-cysteinyl)pyruvic acid O-phosphothioketal modification is found at C116. Positions 306 and 328 each coordinate UDP-N-acetyl-alpha-D-glucosamine.

Belongs to the EPSP synthase family. MurA subfamily.

Its subcellular location is the cytoplasm. It carries out the reaction phosphoenolpyruvate + UDP-N-acetyl-alpha-D-glucosamine = UDP-N-acetyl-3-O-(1-carboxyvinyl)-alpha-D-glucosamine + phosphate. Its pathway is cell wall biogenesis; peptidoglycan biosynthesis. Cell wall formation. Adds enolpyruvyl to UDP-N-acetylglucosamine. The protein is UDP-N-acetylglucosamine 1-carboxyvinyltransferase of Pseudoalteromonas translucida (strain TAC 125).